The sequence spans 110 residues: BET1-like protein (110 aa).

Topologically, residues 1–85 (MADPWNRGHG…MVRSGRDNRK (85 aa)) are cytoplasmic. In terms of domain architecture, t-SNARE coiled-coil homology spans 14-76 (DMLDAENKRM…TGSVKRFSTM (63 aa)). The helical; Anchor for type IV membrane protein transmembrane segment at 86 to 106 (ILCYVSVGLVVAFFLLYYLVS) threads the bilayer. Residues 107–110 (RMQN) are Lumenal-facing.

In terms of assembly, component of a SNARE complex consisting of stx5, ykt6, gosr2 and bet1l.

It is found in the golgi apparatus membrane. Functionally, vesicle SNARE required for targeting and fusion of retrograde transport vesicles with the Golgi complex. Required for the integrity of the Golgi complex. In Danio rerio (Zebrafish), this protein is BET1-like protein (bet1l).